The chain runs to 147 residues: UPF0275 protein PM0504 (147 aa).

It belongs to the UPF0275 family.

This is UPF0275 protein PM0504 from Pasteurella multocida (strain Pm70).